We begin with the raw amino-acid sequence, 257 residues long: Imidazole glycerol phosphate synthase subunit HisF (257 aa).

Active-site residues include Asp12 and Asp131.

This sequence belongs to the HisA/HisF family. Heterodimer of HisH and HisF.

Its subcellular location is the cytoplasm. It carries out the reaction 5-[(5-phospho-1-deoxy-D-ribulos-1-ylimino)methylamino]-1-(5-phospho-beta-D-ribosyl)imidazole-4-carboxamide + L-glutamine = D-erythro-1-(imidazol-4-yl)glycerol 3-phosphate + 5-amino-1-(5-phospho-beta-D-ribosyl)imidazole-4-carboxamide + L-glutamate + H(+). Its pathway is amino-acid biosynthesis; L-histidine biosynthesis; L-histidine from 5-phospho-alpha-D-ribose 1-diphosphate: step 5/9. Its function is as follows. IGPS catalyzes the conversion of PRFAR and glutamine to IGP, AICAR and glutamate. The HisF subunit catalyzes the cyclization activity that produces IGP and AICAR from PRFAR using the ammonia provided by the HisH subunit. The sequence is that of Imidazole glycerol phosphate synthase subunit HisF from Burkholderia ambifaria (strain MC40-6).